The sequence spans 176 residues: Large ribosomal subunit protein eL20 (176 aa).

Lysine 11 participates in a covalent cross-link: Glycyl lysine isopeptide (Lys-Gly) (interchain with G-Cter in SUMO2). Tyrosine 63 carries the post-translational modification Phosphotyrosine. Residue serine 71 is modified to Phosphoserine. Lysine 76 carries the post-translational modification N6-succinyllysine. Serine 123 carries the post-translational modification Phosphoserine. Residues lysine 128 and lysine 170 each participate in a glycyl lysine isopeptide (Lys-Gly) (interchain with G-Cter in SUMO2) cross-link.

This sequence belongs to the eukaryotic ribosomal protein eL20 family. Component of the large ribosomal subunit. Binds IPO9 with high affinity.

Its subcellular location is the cytoplasm. Functionally, component of the large ribosomal subunit. The ribosome is a large ribonucleoprotein complex responsible for the synthesis of proteins in the cell. This Bos taurus (Bovine) protein is Large ribosomal subunit protein eL20 (RPL18A).